The following is a 461-amino-acid chain: Photosystem II CP43 reaction center protein (461 aa).

A propeptide spanning residues M1–E2 is cleaved from the precursor. T3 carries the N-acetylthreonine modification. The residue at position 3 (T3) is a Phosphothreonine. 5 helical membrane-spanning segments follow: residues L57 to A81, L122 to N143, K166 to T188, K243 to S263, and W279 to A300. E355 serves as a coordination point for [CaMn4O5] cluster. Residues R435–P459 traverse the membrane as a helical segment.

This sequence belongs to the PsbB/PsbC family. PsbC subfamily. PSII is composed of 1 copy each of membrane proteins PsbA, PsbB, PsbC, PsbD, PsbE, PsbF, PsbH, PsbI, PsbJ, PsbK, PsbL, PsbM, PsbT, PsbX, PsbY, PsbZ, Psb30/Ycf12, at least 3 peripheral proteins of the oxygen-evolving complex and a large number of cofactors. It forms dimeric complexes. Requires Binds multiple chlorophylls and provides some of the ligands for the Ca-4Mn-5O cluster of the oxygen-evolving complex. It may also provide a ligand for a Cl- that is required for oxygen evolution. PSII binds additional chlorophylls, carotenoids and specific lipids. as cofactor.

The protein localises to the plastid. Its subcellular location is the chloroplast thylakoid membrane. One of the components of the core complex of photosystem II (PSII). It binds chlorophyll and helps catalyze the primary light-induced photochemical processes of PSII. PSII is a light-driven water:plastoquinone oxidoreductase, using light energy to abstract electrons from H(2)O, generating O(2) and a proton gradient subsequently used for ATP formation. The sequence is that of Photosystem II CP43 reaction center protein from Chlorokybus atmophyticus (Soil alga).